The following is a 347-amino-acid chain: Transcription factor JunD (347 aa).

The segment at 1-46 is disordered; it reads METPFYGDEALSGLGGGGSSSGGGGSFASPGRLFPGAPPTAAPGSM. A compositionally biased stretch (gly residues) spans 13–26; sequence GLGGGGSSSGGGGS. Residues 29–41 carry the Menin-binding motif (MBM) motif; the sequence is SPGRLFPGAPPTA. The short motif at 48–57 is the MAP kinase docking motif; essential for its phosphorylation element; sequence KKDALTLSLS. A disordered region spans residues 63–91; it reads ALKPAAAPPPGPLRTDGAPGTAPPDGLLA. S92 is modified (phosphoserine). A Phosphoserine; by MAPK8 modification is found at S102. T119 is modified (phosphothreonine). 2 disordered regions span residues 164-183 and 218-264; these read AAAGGPSGTAAGAAPPSELA and EPVP…IDMD. The span at 220-231 shows a compositional bias: pro residues; sequence VPFPPPPPPGTL. Phosphoserine is present on residues S251, S255, and S259. Positions 268-295 are basic motif; sequence RIKAERKRLRNRIAASKCRKRKLERISR. The bZIP domain maps to 268 to 331; it reads RIKAERKRLR…AQLKQKVLSH (64 aa). Residues 296–324 are leucine-zipper; sequence LEEKVKTLKSQNTELASTASLLREQVAQL.

The protein belongs to the bZIP family. Jun subfamily. In terms of assembly, heterodimer; binds DNA as a heterodimer. Component of an AP-1 transcription factor complex composed of JUN-FOS heterodimers. As part of the AP-1 transcription factor complex, forms heterodimers with FOS proteins, thereby binding to the AP-1 consensus sequence and stimulating transcription. Forms heterodimers with FOSB; thereby binding to the AP-1 consensus sequence. Interacts (via MBM motif) with MEN1; this interaction represses transcriptional activation. Interacts with MAPK10; this interaction is inhibited in the presence of MEN1. In terms of processing, phosphorylated by MAP kinases MAPK8 and MAPK10; phosphorylation is inhibited in the presence of MEN1.

It is found in the nucleus. Functionally, transcription factor binding AP-1 sites. Heterodimerizes with proteins of the FOS family to form an AP-1 transcription factor complex, thereby enhancing their DNA binding activity to an AP-1 consensus sequence 3'-TGA[GC]TCA-5' and enhancing their transcriptional activity. The sequence is that of Transcription factor JunD (JUND) from Bos taurus (Bovine).